The sequence spans 182 residues: ATP-dependent protease subunit HslV (182 aa).

Thr-12 is a catalytic residue. Positions 167, 170, and 173 each coordinate Na(+).

This sequence belongs to the peptidase T1B family. HslV subfamily. A double ring-shaped homohexamer of HslV is capped on each side by a ring-shaped HslU homohexamer. The assembly of the HslU/HslV complex is dependent on binding of ATP.

It is found in the cytoplasm. It carries out the reaction ATP-dependent cleavage of peptide bonds with broad specificity.. Allosterically activated by HslU binding. In terms of biological role, protease subunit of a proteasome-like degradation complex believed to be a general protein degrading machinery. In Chlorobium phaeovibrioides (strain DSM 265 / 1930) (Prosthecochloris vibrioformis (strain DSM 265)), this protein is ATP-dependent protease subunit HslV.